Consider the following 348-residue polypeptide: tRNA N6-adenosine threonylcarbamoyltransferase (348 aa).

Residues histidine 111 and histidine 115 each coordinate Fe cation. Residues leucine 134 to glycine 138, aspartate 167, glycine 180, and asparagine 276 contribute to the substrate site. Residue aspartate 304 coordinates Fe cation.

Belongs to the KAE1 / TsaD family. The cofactor is Fe(2+).

The protein resides in the cytoplasm. The enzyme catalyses L-threonylcarbamoyladenylate + adenosine(37) in tRNA = N(6)-L-threonylcarbamoyladenosine(37) in tRNA + AMP + H(+). Its function is as follows. Required for the formation of a threonylcarbamoyl group on adenosine at position 37 (t(6)A37) in tRNAs that read codons beginning with adenine. Is involved in the transfer of the threonylcarbamoyl moiety of threonylcarbamoyl-AMP (TC-AMP) to the N6 group of A37, together with TsaE and TsaB. TsaD likely plays a direct catalytic role in this reaction. This Bordetella petrii (strain ATCC BAA-461 / DSM 12804 / CCUG 43448) protein is tRNA N6-adenosine threonylcarbamoyltransferase.